The chain runs to 1133 residues: RNA-dependent RNA polymerase 2 (1133 aa).

Positions 830, 832, and 834 each coordinate Mg(2+).

The protein belongs to the RdRP family. In terms of assembly, interacts with NRPD1 and SHH1. Associates with Pol IV complex, forming an interpolymerase channel bridging their active sites, through which the Pol IV-generated transcript is handed over to the RDR2 active site after being backtracked, where it is used as the template for double-stranded RNA (dsRNA) synthesis. Interacts with JMJ24.

It is found in the nucleus. The protein localises to the nucleoplasm. It localises to the nucleolus. It carries out the reaction RNA(n) + a ribonucleoside 5'-triphosphate = RNA(n+1) + diphosphate. Its function is as follows. RNA-dependent direct polymerase involved in the production of small interfering RNAs (siRNAs). Binds to single-stranded RNA (ssRNA); engages ssRNAs longer than 7 nucleotides and initiates internal to their 3' ends. Able to transcribe the RNA of an RNA/DNA hybrid, the transcript produced by Pol IV, if its 3' end is accessible, to generate double-stranded small interfering RNAs (dsRNAs) precursor essential for establishing and maintaining DNA methylation. Required for the biogenesis of endogenous siRNAs of 24 nucleotide which derive from heterochromatin and DNA repeats such as transposons or endogenous gene tandem repeats, such as repeats present in FWA gene. Involved in transcriptional gene silencing (TGS). Component of the RNA-directed DNA methylation (RdDM) silencing pathway that utilizes siRNAs to guide DNA methyltransferases to asymmetric cytosines. Involved in control of flowering time through RdDM of FWA locus. Required for reception of long-distance mRNA silencing in the shoot. Required for the formation of telomeric siRNAs and the RNA-dependent DNA methylation of asymmetric cytosines in telomeric (5'-CCCTAAA-3') repeats. This is RNA-dependent RNA polymerase 2 from Arabidopsis thaliana (Mouse-ear cress).